The sequence spans 125 residues: Small ribosomal subunit protein uS13 (125 aa).

The tract at residues 90 to 125 (TRHRRGLPVRGQRTHTNARTKKGPRRAIAGKKKVTK) is disordered.

Belongs to the universal ribosomal protein uS13 family. In terms of assembly, part of the 30S ribosomal subunit. Forms a loose heterodimer with protein S19. Forms two bridges to the 50S subunit in the 70S ribosome.

Functionally, located at the top of the head of the 30S subunit, it contacts several helices of the 16S rRNA. In the 70S ribosome it contacts the 23S rRNA (bridge B1a) and protein L5 of the 50S subunit (bridge B1b), connecting the 2 subunits; these bridges are implicated in subunit movement. Contacts the tRNAs in the A and P-sites. The chain is Small ribosomal subunit protein uS13 from Gemmatimonas aurantiaca (strain DSM 14586 / JCM 11422 / NBRC 100505 / T-27).